Reading from the N-terminus, the 301-residue chain is Rhodopsin (301 aa).

Residues 1-18 (LHMIHLHWYQYPPMNPMM) lie on the Extracellular side of the membrane. The helical transmembrane segment at 19-43 (YPLLLIFMLFTGILCLAGNFVTIWV) threads the bilayer. Topologically, residues 44–55 (FMNTKSLRTPAN) are cytoplasmic. Residues 56–78 (LLVVNLAMSDFLMMFTMFPPMMV) form a helical membrane-spanning segment. Residues 79–92 (TCYYHTWTLGPTFC) are Extracellular-facing. A disulfide bridge connects residues Cys92 and Cys169. The chain crosses the membrane as a helical span at residues 93-115 (QVYGFLGNLCGCASIWTMVFITF). The 'Ionic lock' involved in activated form stabilization signature appears at 116–118 (DRY). The Cytoplasmic portion of the chain corresponds to 116–134 (DRYNVIVKGVAGEPLSTKK). A helical membrane pass occupies residues 135–155 (ASLWILIVWVLSLAWCMAPFF). Residues 156 to 182 (GWNRYVPEGNLTGCGTDYLSEDILSRS) are Extracellular-facing. Residue Asn165 is glycosylated (N-linked (GlcNAc...) asparagine). The helical transmembrane segment at 183 to 204 (YLYIYSTWVYFLPLTITIYCYV) threads the bilayer. The Cytoplasmic portion of the chain corresponds to 205 to 245 (FIIKAVAAHEKGMRDQAKKMGIKSLRNEEAQKTSAECRLAK). The chain crosses the membrane as a helical span at residues 246 to 267 (IAMTTVALWFIAWTPYLLINWV). Residues 268–278 (GMFARSYLSPV) are Extracellular-facing. The helical transmembrane segment at 279 to 300 (YTIWGYVFAKANAVYNPIVYAI) threads the bilayer. Lys288 is subject to N6-(retinylidene)lysine.

Belongs to the G-protein coupled receptor 1 family. Opsin subfamily. As to quaternary structure, homodimer. Interacts with GNAQ. In terms of processing, contains one covalently linked retinal chromophore.

It localises to the cell projection. The protein localises to the rhabdomere membrane. In terms of biological role, photoreceptor required for image-forming vision at low light intensity. Can use both retinal and 3-dehydroretinal as visual pigment. Light-induced isomerization of 11-cis to all-trans retinal triggers a conformational change that activates signaling via G-proteins. Signaling via GNAQ probably mediates the activation of phospholipase C. This is Rhodopsin (RHO) from Procambarus milleri (Miami cave crayfish).